The following is a 927-amino-acid chain: MSIQKLNDTTNSGYVSSEETDSLLVSSSNPSKGGGRTALLRQVKSNSTNGPTTGASTSSSGSVSGGGGGSGSGGGSASGSAAGASKPTLMRQDRTSTYLTSPQQSQHARMGSEESMRGGASGAAGHDEDVEQGLVRSSIVPDIEVHEEDQEQHSQQLNATTMATMTNNQQQQQPTISIMNLSLKPGDSHSHSSSPGSHPNLGTSSYQNLASSIPPSVPSRCRACRNCSRRASTTPTTLIDRSASRDSVKSAFQQGNLSGSMAICISNSALPQQQQLQQQYHLQQQQQQHYQLQQHHLHQQQLQQSQQQVPPVLITSSPTNGSRIIRQSSQPESSSTAICCGPHSACVGHAHSHSHTVPNVSLKQLRESSGDGIAGIAADSLRINGGMRPFKQLRKPASTLSIPGSMKTPSIANREQISSGCNEEAAEALVGIHSDYPRYEMYMEERALTGGNTSRKPSTNSAKHKPNVGYRLGKRKALFEKRKRISDYALVMGMFGIIVMVIENELSSAGVYTKASFYSTALKTLISVSTVILLGLIVAYHALEVQLFMIDNCADDWRIAMTWQRISQIGLELFICAIHPIPGEYYFQWTTKLANKNKTIGTEMVPYDVALSLPMFLRLYLICRVMLLHSKLFTDASSRSIGALNRINFNTRFVLKTLMTICPGTVLLVFMVSLWIIASWTLRQCERFHDEEHANLLNSMWLTAITFLCVGYGDIVPNTYCGRGITLTCGMVGAGCTALLVAVVSRKLELTRAEKHVHNFMMDTQLTKRLKNAAANVLRETWLIYKHTRLVKRVNPGRVRTHQRKFLLAIYALRKVKMDQRKLMDNANTITDMAKTQNTVYEIISDMSSRQDAIEERLTNLEDKMQSIQEHMESLPDLLSRCLTQHQERIEQRRNFLHPDTAAVAPIQAPTPQSMFNAAPMLFPHSS.

Over residues 1–31 the composition is skewed to polar residues; it reads MSIQKLNDTTNSGYVSSEETDSLLVSSSNPS. 3 disordered regions span residues 1-131, 181-251, and 296-336; these read MSIQ…EDVE, LSLK…VKSA, and HLHQ…SSST. Positions 45–62 are enriched in low complexity; sequence SNSTNGPTTGASTSSSGS. Residues 63 to 77 show a composition bias toward gly residues; the sequence is VSGGGGGSGSGGGSA. Composition is skewed to polar residues over residues 95–107 and 200–214; these read TSTYLTSPQQSQH and NLGTSSYQNLASSIP. 2 stretches are compositionally biased toward low complexity: residues 219–232 and 296–308; these read SRCRACRNCSRRAS and HLHQQQLQQSQQQ. Residues 314 to 336 show a composition bias toward polar residues; the sequence is ITSSPTNGSRIIRQSSQPESSST. A helical membrane pass occupies residues 489-509; sequence ALVMGMFGIIVMVIENELSSA. A helical membrane pass occupies residues 530–550; sequence TVILLGLIVAYHALEVQLFMI. A helical transmembrane segment spans residues 569–589; it reads IGLELFICAIHPIPGEYYFQW. A helical transmembrane segment spans residues 609 to 629; that stretch reads VALSLPMFLRLYLICRVMLLH. Residues 658 to 678 form a helical membrane-spanning segment; it reads LMTICPGTVLLVFMVSLWIIA. An intramembrane region (pore-forming) is located at residues 696–716; the sequence is LLNSMWLTAITFLCVGYGDIV. Residues 724-744 form a helical membrane-spanning segment; it reads GITLTCGMVGAGCTALLVAVV. A calmodulin-binding region spans residues 763–839; sequence DTQLTKRLKN…ITDMAKTQNT (77 aa).

It belongs to the potassium channel KCNN family. SK subfamily. Heterooligomer. The complex is composed of 4 channel subunits each of which binds to a calmodulin subunit which regulates the channel activity through calcium-binding.

It is found in the membrane. In terms of biological role, forms a voltage-independent potassium channel activated by intracellular calcium. Activation is followed by membrane hyperpolarization. Thought to regulate neuronal excitability by contributing to the slow component of synaptic afterhyperpolarization. The channel is blocked by apamin. The polypeptide is Small conductance calcium-activated potassium channel protein (Drosophila melanogaster (Fruit fly)).